We begin with the raw amino-acid sequence, 624 residues long: Steryl-sulfatase (624 aa).

The signal sequence occupies residues 1-22; the sequence is MPRPRPLLLAVMAATLADIILA. Residues 24–192 lie on the Lumenal side of the membrane; sequence DPAPAGPAPR…GTVFGPALRV (169 aa). Positions 43 and 44 each coordinate Ca(2+). N55 is a glycosylation site (N-linked (GlcNAc...) asparagine). C83 serves as a coordination point for Ca(2+). C83 (nucleophile) is an active-site residue. 3-oxoalanine (Cys) is present on C83. The active site involves H144. Intrachain disulfides connect C149–C156 and C178–C250. The helical transmembrane segment at 193 to 216 threads the bilayer; that stretch reads FAAGPLAALGASLAAMAAARWAGL. Residues 217–220 lie on the Cytoplasmic side of the membrane; that stretch reads ARVP. Residues 221 to 242 form a helical membrane-spanning segment; it reads GWALAGTAAAMLAVGGPRSASC. Residues 243-624 are Lumenal-facing; it reads LGFRPANCFL…ATTRTQATPR (382 aa). D350 and H351 together coordinate Ca(2+). 2 disulfide bridges follow: C454–C495 and C487–C493. N-linked (GlcNAc...) asparagine glycosylation is present at N465. A disordered region spans residues 572-624; that stretch reads GGAGGGAGAQDDSGHAHGDGSHAHDDPGHAQDRGDDDAHYGGHATTRTQATPR. Residues 583–611 show a composition bias toward basic and acidic residues; it reads DSGHAHGDGSHAHDDPGHAQDRGDDDAHY.

The protein belongs to the sulfatase family. In terms of assembly, homodimer. It depends on Ca(2+) as a cofactor. In terms of processing, the conversion to 3-oxoalanine (also known as C-formylglycine, FGly), of a serine or cysteine residue in prokaryotes and of a cysteine residue in eukaryotes, is critical for catalytic activity.

The protein resides in the microsome membrane. It localises to the endoplasmic reticulum membrane. The catalysed reaction is dehydroepiandrosterone 3-sulfate + H2O = 3beta-hydroxyandrost-5-en-17-one + sulfate + H(+). It catalyses the reaction estrone 3-sulfate + H2O = estrone + sulfate + H(+). Catalyzes the conversion of sulfated steroid precursors, such as dehydroepiandrosterone sulfate (DHEA-S) and estrone sulfate to the free steroid. This chain is Steryl-sulfatase (Sts), found in Mus musculus (Mouse).